The chain runs to 85 residues: Large ribosomal subunit protein bL27 (85 aa).

Residues 1 to 20 (MAHKKAGGSTRNGRDSESKR) form a disordered region.

It belongs to the bacterial ribosomal protein bL27 family.

This chain is Large ribosomal subunit protein bL27, found in Azotobacter vinelandii (strain DJ / ATCC BAA-1303).